The primary structure comprises 446 residues: MAPLSQISSHINSTCGAENSTGVNRARPHAYYALSYCALILAIIFGNGLVCAAVLRERALQTTTNYLVVSLAVADLLVATLVMPWVVYLEVTGGVWNFSRICCDVFVTLDVMMCTASILNLCAISIDRYTAVVMPVHYQHGTGQSSCRRVALMITAVWVLAFAVSCPLLFGFNTTGDPSICSISNPDFVIYSSVVSFYVPFGVTVLVYARIYMVLRQRRRKRILTRQNSQCISIRPGFPQQSSCLRLHPIRQFSIRARFLSDATGQMEHIEDKPYPQKCQDPLLSHLQPLSPGQTHGELKRYYSICQDTALRHPNFEGGGGMSQVERTRNSLSPTMAPKLSLEVRKLSNGRLSTSLKLGPLQPRGVPLREKKATQMVVIVLGAFIVCWLPFFLTHVLNTHCQACHVSPELYRATTWLGYVNSALNPVIYTTFNIEFRKAFLKILSC.

Over M1 to Y32 the chain is Extracellular. N12 and N19 each carry an N-linked (GlcNAc...) asparagine glycan. The chain crosses the membrane as a helical span at residues A33–L55. At R56–N65 the chain is on the cytoplasmic side. The chain crosses the membrane as a helical span at residues Y66–Y88. Over L89 to D104 the chain is Extracellular. A glycan (N-linked (GlcNAc...) asparagine) is linked at N97. A disulfide bond links C103 and C181. Residues V105–I126 form a helical membrane-spanning segment. The Cytoplasmic segment spans residues D127–R149. Residues V150–F170 form a helical membrane-spanning segment. Residues G171–D187 are Extracellular-facing. N-linked (GlcNAc...) asparagine glycosylation is present at N173. The helical transmembrane segment at F188 to A209 threads the bilayer. At R210 to Q375 the chain is on the cytoplasmic side. The chain crosses the membrane as a helical span at residues M376–L397. Over N398 to R412 the chain is Extracellular. An intrachain disulfide couples C401 to C404. Residues A413–F432 traverse the membrane as a helical segment. The Cytoplasmic portion of the chain corresponds to N433–C446.

The protein belongs to the G-protein coupled receptor 1 family. Interacts with CLIC6. Interacts with GRK4. Interacts with PALM. Interacts with FLNA (via filamin repeat 21); increases PKA-mediated phosphorylation of FLNA. In terms of processing, phosphorylated by GRK4. Post-translationally, palmitoylated.

Its subcellular location is the cell membrane. Functionally, dopamine receptor whose activity is mediated by G proteins which inhibit adenylyl cyclase. Promotes cell proliferation. In Mus musculus (Mouse), this protein is D(3) dopamine receptor (Drd3).